The primary structure comprises 364 residues: Phenylalanine dehydrogenase (364 aa).

An NAD(+)-binding site is contributed by Arg62. Lys86 is an L-phenylalanine binding site. Lys98 functions as the Proton donor/acceptor in the catalytic mechanism. NAD(+) is bound by residues Asp133, Ser164, Thr168, 255–256, and 276–278; these read AM and AAN. An L-phenylalanine-binding site is contributed by Asn278.

Belongs to the Glu/Leu/Phe/Val dehydrogenases family.

The enzyme catalyses L-phenylalanine + NAD(+) + H2O = 3-phenylpyruvate + NH4(+) + NADH + H(+). It participates in amino-acid biosynthesis; L-phenylalanine biosynthesis; L-phenylalanine from phenylpyruvate (PDH route): step 1/1. Catalyzes the reversible NAD(+)-dependent oxidative deamination of L-phenylalanine to phenylpyruvate. This chain is Phenylalanine dehydrogenase, found in Rhodococcus jostii (strain RHA1).